A 215-amino-acid chain; its full sequence is Cytochrome b6 (215 aa).

A helical membrane pass occupies residues 32-52 (IFYCIGGIVFTSFLIQVASGF). Residue Cys35 participates in heme c binding. Residues His86 and His100 each contribute to the heme b site. 3 helical membrane-spanning segments follow: residues 90–110 (ASMM…TGGF), 116–136 (LTWV…VTGY), and 186–206 (LHTF…FLMI). Heme b is bound by residues His187 and His202.

The protein belongs to the cytochrome b family. PetB subfamily. The 4 large subunits of the cytochrome b6-f complex are cytochrome b6, subunit IV (17 kDa polypeptide, PetD), cytochrome f and the Rieske protein, while the 4 small subunits are PetG, PetL, PetM and PetN. The complex functions as a dimer. Heme b serves as cofactor. It depends on heme c as a cofactor.

The protein resides in the plastid. It is found in the chloroplast thylakoid membrane. Functionally, component of the cytochrome b6-f complex, which mediates electron transfer between photosystem II (PSII) and photosystem I (PSI), cyclic electron flow around PSI, and state transitions. This Gracilaria tenuistipitata var. liui (Red alga) protein is Cytochrome b6.